A 567-amino-acid chain; its full sequence is Oxygen-dependent choline dehydrogenase (567 aa).

4 to 33 lines the FAD pocket; sequence DYIIIGAGSAGNVLAARLTEDADVTVLLLE. The Proton acceptor role is filled by His-473.

This sequence belongs to the GMC oxidoreductase family. FAD is required as a cofactor.

The catalysed reaction is choline + A = betaine aldehyde + AH2. It catalyses the reaction betaine aldehyde + NAD(+) + H2O = glycine betaine + NADH + 2 H(+). The protein operates within amine and polyamine biosynthesis; betaine biosynthesis via choline pathway; betaine aldehyde from choline (cytochrome c reductase route): step 1/1. Involved in the biosynthesis of the osmoprotectant glycine betaine. Catalyzes the oxidation of choline to betaine aldehyde and betaine aldehyde to glycine betaine at the same rate. In Yersinia pestis (strain Pestoides F), this protein is Oxygen-dependent choline dehydrogenase.